A 244-amino-acid chain; its full sequence is Large ribosomal subunit protein uL30w (244 aa).

This sequence belongs to the universal ribosomal protein uL30 family.

In Arabidopsis thaliana (Mouse-ear cress), this protein is Large ribosomal subunit protein uL30w (RPL7D).